The following is a 386-amino-acid chain: Alcohol dehydrogenase-like 2 (386 aa).

Residues C51, T53, H74, C104, C107, C110, C118, and C183 each contribute to the Zn(2+) site. 2 residues coordinate an alcohol: T53 and H74. T53 contacts NAD(+). Residues 208–213 (GLGAVG), D232, K237, 302–304 (LGM), F329, and R379 each bind NAD(+).

This sequence belongs to the zinc-containing alcohol dehydrogenase family. Class-III subfamily. Homodimer. It depends on Zn(2+) as a cofactor.

The protein resides in the cytoplasm. The enzyme catalyses a primary alcohol + NAD(+) = an aldehyde + NADH + H(+). It carries out the reaction a secondary alcohol + NAD(+) = a ketone + NADH + H(+). The polypeptide is Alcohol dehydrogenase-like 2 (Arabidopsis thaliana (Mouse-ear cress)).